Reading from the N-terminus, the 483-residue chain is Glutamate--tRNA ligase (483 aa).

The short motif at 11–21 (PSPTGLLHIGN) is the 'HIGH' region element. The 'KMSKS' region motif lies at 255-259 (KLSKR). Lys258 is a binding site for ATP.

The protein belongs to the class-I aminoacyl-tRNA synthetase family. Glutamate--tRNA ligase type 1 subfamily. As to quaternary structure, monomer.

It localises to the cytoplasm. The catalysed reaction is tRNA(Glu) + L-glutamate + ATP = L-glutamyl-tRNA(Glu) + AMP + diphosphate. Catalyzes the attachment of glutamate to tRNA(Glu) in a two-step reaction: glutamate is first activated by ATP to form Glu-AMP and then transferred to the acceptor end of tRNA(Glu). In Lactococcus lactis subsp. cremoris (strain SK11), this protein is Glutamate--tRNA ligase.